The chain runs to 314 residues: Zinc-binding alcohol dehydrogenase domain-containing protein cipB (314 aa).

It belongs to the zinc-containing alcohol dehydrogenase family.

Involved in osmoadaptation. This Emericella nidulans (strain FGSC A4 / ATCC 38163 / CBS 112.46 / NRRL 194 / M139) (Aspergillus nidulans) protein is Zinc-binding alcohol dehydrogenase domain-containing protein cipB (cipB).